We begin with the raw amino-acid sequence, 419 residues long: Maltoporin 2 (419 aa).

The N-terminal stretch at 1 to 23 (MKTSLRTLSVALAAALVSPSVLA) is a signal peptide.

It belongs to the porin LamB (TC 1.B.3) family. Homotrimer formed of three 18-stranded antiparallel beta-barrels, containing three independent channels.

The protein resides in the cell outer membrane. It carries out the reaction beta-maltose(in) = beta-maltose(out). In terms of biological role, involved in the transport of maltose and maltodextrins. This chain is Maltoporin 2, found in Yersinia pseudotuberculosis serotype O:1b (strain IP 31758).